The following is a 202-amino-acid chain: Peptide deformylase 2 (202 aa).

Residues Cys120 and His162 each contribute to the Fe cation site. Glu163 is a catalytic residue. His166 contacts Fe cation.

This sequence belongs to the polypeptide deformylase family. The cofactor is Fe(2+).

It catalyses the reaction N-terminal N-formyl-L-methionyl-[peptide] + H2O = N-terminal L-methionyl-[peptide] + formate. Removes the formyl group from the N-terminal Met of newly synthesized proteins. Requires at least a dipeptide for an efficient rate of reaction. N-terminal L-methionine is a prerequisite for activity but the enzyme has broad specificity at other positions. The protein is Peptide deformylase 2 of Rickettsia conorii (strain ATCC VR-613 / Malish 7).